Consider the following 87-residue polypeptide: Phosphoribosyl-ATP pyrophosphatase (87 aa).

The protein belongs to the PRA-PH family.

The protein localises to the cytoplasm. The catalysed reaction is 1-(5-phospho-beta-D-ribosyl)-ATP + H2O = 1-(5-phospho-beta-D-ribosyl)-5'-AMP + diphosphate + H(+). The protein operates within amino-acid biosynthesis; L-histidine biosynthesis; L-histidine from 5-phospho-alpha-D-ribose 1-diphosphate: step 2/9. The sequence is that of Phosphoribosyl-ATP pyrophosphatase (hisE) from Corynebacterium glutamicum (strain ATCC 13032 / DSM 20300 / JCM 1318 / BCRC 11384 / CCUG 27702 / LMG 3730 / NBRC 12168 / NCIMB 10025 / NRRL B-2784 / 534).